The primary structure comprises 98 residues: Large ribosomal subunit protein bL25 (98 aa).

Positions 1–22 are disordered; that stretch reads MANFVLNATARNEDKQGKGASR.

The protein belongs to the bacterial ribosomal protein bL25 family. As to quaternary structure, part of the 50S ribosomal subunit; part of the 5S rRNA/L5/L18/L25 subcomplex. Contacts the 5S rRNA. Binds to the 5S rRNA independently of L5 and L18.

This is one of the proteins that binds to the 5S RNA in the ribosome where it forms part of the central protuberance. The polypeptide is Large ribosomal subunit protein bL25 (Acinetobacter baylyi (strain ATCC 33305 / BD413 / ADP1)).